The sequence spans 695 residues: Probable serine/threonine-protein kinase DDB_G0279405 (695 aa).

Disordered regions lie at residues 119-138 (IVAQ…PQPQ) and 149-192 (QIPT…KRHK). The segment covering 124 to 138 (QPQPQPQPQPQPQPQ) has biased composition (pro residues). Positions 149-160 (QIPTTPPQQISQ) are enriched in low complexity. The segment covering 161-173 (FNITGNKSPSSIG) has biased composition (polar residues). Positions 201–462 (YVFVRKLGKG…IAEIKSHKWT (262 aa)) constitute a Protein kinase domain. ATP-binding positions include 207–215 (LGKGTFGKV) and K230. D329 (proton acceptor) is an active-site residue. Residues 491 to 580 (TDHTIKPSDN…NQNQNNNNNS (90 aa)) are disordered. Positions 510 to 528 (LSSSSGGESSGIIGSSNES) are enriched in low complexity. Polar residues predominate over residues 529–541 (KSMYNNVNSKQKI). The segment covering 542–580 (QNQNQNQNQNQNQNQNQNQNQNHNQNQNQNQNQNNNNNS) has biased composition (low complexity).

This sequence belongs to the protein kinase superfamily. Ser/Thr protein kinase family.

The catalysed reaction is L-seryl-[protein] + ATP = O-phospho-L-seryl-[protein] + ADP + H(+). It catalyses the reaction L-threonyl-[protein] + ATP = O-phospho-L-threonyl-[protein] + ADP + H(+). The sequence is that of Probable serine/threonine-protein kinase DDB_G0279405 from Dictyostelium discoideum (Social amoeba).